We begin with the raw amino-acid sequence, 1962 residues long: Myosin heavy chain, muscle (1962 aa).

The region spanning 33 to 82 (DSKKSCWIPDEKEGYLLGEIKATKGDIVSVGLQGGEVRDIKSEKVEKVNP) is the Myosin N-terminal SH3-like domain. Positions 86 to 777 (EKIEDMADMT…VLGQMEEFRD (692 aa)) constitute a Myosin motor domain. Residue 179 to 186 (GESGAGKT) participates in ATP binding. Residues 656-678 (LNSLMTTLRSTQPHFVRCIIPNE) are actin-binding. The IQ domain maps to 780 to 809 (LGKIMSWMQAWARGYLSRKGFKKLQEQRVA). Residues 802–1927 (KLQEQRVALK…KFRAKGRAGS (1126 aa)) are a coiled coil. 2 disordered regions span residues 1822-1862 (ENEL…NHER) and 1922-1962 (KGRA…ENEF).

It belongs to the TRAFAC class myosin-kinesin ATPase superfamily. Myosin family. Muscle myosin is a hexameric protein that consists of 2 heavy chain subunits (MHC), 2 alkali light chain subunits (MLC) and 2 regulatory light chain subunits (MLC-2). In terms of tissue distribution, expressed in larval and adult muscles. Isoforms containing exon 9a are expressed in indirect flight muscles, exons 9a and 9b are expressed in jump muscles, exons 9b and 9c are expressed in other larval and adult muscles.

The protein resides in the cytoplasm. Its subcellular location is the myofibril. Its function is as follows. Muscle contraction. In Drosophila melanogaster (Fruit fly), this protein is Myosin heavy chain, muscle (Mhc).